We begin with the raw amino-acid sequence, 107 residues long: MSGFSLADLERIVDERSKASPEQSWTAKLVAGGQPKAAKKLGEEAIEAVMAAATGDRDNLTYEAADVLYHLLVVLKIAEIPLENVMAELERRTAQSGLKEKANRQSS.

Belongs to the PRA-PH family.

The protein localises to the cytoplasm. It carries out the reaction 1-(5-phospho-beta-D-ribosyl)-ATP + H2O = 1-(5-phospho-beta-D-ribosyl)-5'-AMP + diphosphate + H(+). The protein operates within amino-acid biosynthesis; L-histidine biosynthesis; L-histidine from 5-phospho-alpha-D-ribose 1-diphosphate: step 2/9. This is Phosphoribosyl-ATP pyrophosphatase from Rhizobium etli (strain CIAT 652).